A 128-amino-acid chain; its full sequence is Riboflavin kinase (128 aa).

12 to 17 (GKGEGK) contributes to the CDP binding site. The Mg(2+) site is built by T41 and N43. Residues T97 and E105 each coordinate FMN. 110-113 (IKLR) provides a ligand contact to CDP.

The protein belongs to the archaeal riboflavin kinase family. Mg(2+) is required as a cofactor.

It carries out the reaction riboflavin + CTP = CDP + FMN + H(+). It participates in cofactor biosynthesis; FMN biosynthesis; FMN from riboflavin (CTP route): step 1/1. Its function is as follows. Catalyzes the CTP-dependent phosphorylation of riboflavin (vitamin B2) to form flavin mononucleotide (FMN). In Methanococcus aeolicus (strain ATCC BAA-1280 / DSM 17508 / OCM 812 / Nankai-3), this protein is Riboflavin kinase.